The primary structure comprises 347 residues: N-acetyl-gamma-glutamyl-phosphate reductase (347 aa).

Residue Cys-152 is part of the active site.

This sequence belongs to the NAGSA dehydrogenase family. Type 1 subfamily.

It localises to the cytoplasm. It carries out the reaction N-acetyl-L-glutamate 5-semialdehyde + phosphate + NADP(+) = N-acetyl-L-glutamyl 5-phosphate + NADPH + H(+). The protein operates within amino-acid biosynthesis; L-arginine biosynthesis; N(2)-acetyl-L-ornithine from L-glutamate: step 3/4. Catalyzes the NADPH-dependent reduction of N-acetyl-5-glutamyl phosphate to yield N-acetyl-L-glutamate 5-semialdehyde. This Neisseria meningitidis serogroup C (strain 053442) protein is N-acetyl-gamma-glutamyl-phosphate reductase.